The chain runs to 139 residues: Histone H3-like 5 (139 aa).

Residues 1–10 (MARTKQTARI) show a composition bias toward polar residues. The disordered stretch occupies residues 1–43 (MARTKQTARISTGGKAPRKQLAPKAARQSAPATGGVKKPHRFR). Lysine 5 carries the post-translational modification N6,N6,N6-trimethyllysine; alternate. Lysine 5 is subject to N6,N6-dimethyllysine; alternate. Lysine 5 is subject to N6-methyllysine; alternate. Serine 11 is modified (phosphoserine). At threonine 12 the chain carries Phosphothreonine. N6-acetyllysine is present on lysine 15. Residues lysine 19 and lysine 24 each carry the N6-methyllysine; alternate modification. N6-acetyllysine; alternate is present on residues lysine 19 and lysine 24. The residue at position 29 (serine 29) is a Phosphoserine. Lysine 37 bears the N6,N6,N6-trimethyllysine; alternate mark. Position 37 is an N6,N6-dimethyllysine; alternate (lysine 37). N6-methyllysine; alternate is present on lysine 37.

Belongs to the histone H3 family. In terms of assembly, the nucleosome is a histone octamer containing two molecules each of H2A, H2B, H3 and H4 assembled in one H3-H4 heterotetramer and two H2A-H2B heterodimers. The octamer wraps approximately 147 bp of DNA.

It localises to the nucleus. Its subcellular location is the chromosome. Core component of nucleosome. Nucleosomes wrap and compact DNA into chromatin, limiting DNA accessibility to the cellular machineries which require DNA as a template. Histones thereby play a central role in transcription regulation, DNA repair, DNA replication and chromosomal stability. DNA accessibility is regulated via a complex set of post-translational modifications of histones, also called histone code, and nucleosome remodeling. The chain is Histone H3-like 5 from Arabidopsis thaliana (Mouse-ear cress).